The following is a 387-amino-acid chain: Succinate--CoA ligase [ADP-forming] subunit beta (387 aa).

An ATP-grasp domain is found at 9–236 (RDLFESYGVP…AAAADPLEAK (228 aa)). Residues lysine 45, 52 to 54 (GRG), alanine 94, and glutamate 99 contribute to the ATP site. Mg(2+)-binding residues include asparagine 191 and aspartate 205. Residues asparagine 256 and 318–320 (GIT) contribute to the substrate site.

The protein belongs to the succinate/malate CoA ligase beta subunit family. Heterotetramer of two alpha and two beta subunits. Requires Mg(2+) as cofactor.

The enzyme catalyses succinate + ATP + CoA = succinyl-CoA + ADP + phosphate. It catalyses the reaction GTP + succinate + CoA = succinyl-CoA + GDP + phosphate. It functions in the pathway carbohydrate metabolism; tricarboxylic acid cycle; succinate from succinyl-CoA (ligase route): step 1/1. Functionally, succinyl-CoA synthetase functions in the citric acid cycle (TCA), coupling the hydrolysis of succinyl-CoA to the synthesis of either ATP or GTP and thus represents the only step of substrate-level phosphorylation in the TCA. The beta subunit provides nucleotide specificity of the enzyme and binds the substrate succinate, while the binding sites for coenzyme A and phosphate are found in the alpha subunit. The polypeptide is Succinate--CoA ligase [ADP-forming] subunit beta (Clavibacter michiganensis subsp. michiganensis (strain NCPPB 382)).